The chain runs to 638 residues: tRNA uridine 5-carboxymethylaminomethyl modification enzyme MnmG (638 aa).

FAD is bound by residues 15–20 (GAGHAG), isoleucine 127, and serine 182. Residue 276-290 (GPRYCPSIEDKIVRF) participates in NAD(+) binding. Residue glutamine 373 coordinates FAD.

It belongs to the MnmG family. Homodimer. Heterotetramer of two MnmE and two MnmG subunits. Requires FAD as cofactor.

It is found in the cytoplasm. In terms of biological role, NAD-binding protein involved in the addition of a carboxymethylaminomethyl (cmnm) group at the wobble position (U34) of certain tRNAs, forming tRNA-cmnm(5)s(2)U34. This Streptococcus suis (strain 98HAH33) protein is tRNA uridine 5-carboxymethylaminomethyl modification enzyme MnmG.